We begin with the raw amino-acid sequence, 165 residues long: SsrA-binding protein (165 aa).

Residues 141–165 (EDRRHAIAERETKREMDREISRRRR) are disordered.

Belongs to the SmpB family.

It localises to the cytoplasm. Its function is as follows. Required for rescue of stalled ribosomes mediated by trans-translation. Binds to transfer-messenger RNA (tmRNA), required for stable association of tmRNA with ribosomes. tmRNA and SmpB together mimic tRNA shape, replacing the anticodon stem-loop with SmpB. tmRNA is encoded by the ssrA gene; the 2 termini fold to resemble tRNA(Ala) and it encodes a 'tag peptide', a short internal open reading frame. During trans-translation Ala-aminoacylated tmRNA acts like a tRNA, entering the A-site of stalled ribosomes, displacing the stalled mRNA. The ribosome then switches to translate the ORF on the tmRNA; the nascent peptide is terminated with the 'tag peptide' encoded by the tmRNA and targeted for degradation. The ribosome is freed to recommence translation, which seems to be the essential function of trans-translation. The polypeptide is SsrA-binding protein (Anaeromyxobacter sp. (strain Fw109-5)).